The primary structure comprises 510 residues: 2,3-bisphosphoglycerate-independent phosphoglycerate mutase (510 aa).

Residues D14 and S64 each contribute to the Mn(2+) site. S64 functions as the Phosphoserine intermediate in the catalytic mechanism. Substrate is bound by residues H125, 155-156 (RD), R187, R193, 259-262 (RADR), and K332. D399, H403, D440, H441, and H459 together coordinate Mn(2+).

The protein belongs to the BPG-independent phosphoglycerate mutase family. As to quaternary structure, monomer. Requires Mn(2+) as cofactor.

The catalysed reaction is (2R)-2-phosphoglycerate = (2R)-3-phosphoglycerate. It functions in the pathway carbohydrate degradation; glycolysis; pyruvate from D-glyceraldehyde 3-phosphate: step 3/5. Catalyzes the interconversion of 2-phosphoglycerate and 3-phosphoglycerate. Essential for the growth and pathogenicity on the host plant. This is 2,3-bisphosphoglycerate-independent phosphoglycerate mutase from Pseudomonas syringae pv. tomato (strain ATCC BAA-871 / DC3000).